We begin with the raw amino-acid sequence, 742 residues long: MRPPAQARWEGQGPTAPLRLRSGARWGRGRPHCWVYVRVRVTIGYHLDRDDSGGMATTSAASDSACSAAPPPVGGAQAAAAVEEEEREVVRVRVKKCESFLSPEFRSFAVDPQITSLDVLQHILIRAFDLNGKKNFGISYLARDRLGQETFLSLLSDWDLSTAFATASKPYLQLRVDIRPSEDSPLLEDWDIISPKDVIGSDVLLAEKRSSLTTAALPFTQSILSQVGRTLSKVQQVLSWSYGEDVKPFKPPLSDAEFHTYLNHEGQLSRPEELRLRIYHGGVEPSLRKVVWRYLLNVYPDGLTGRERMDYMKRKSREYEQLKSEWAQRVNPEDLEFIRSTVLKDVLRTDRAHPYYAGPEDGPHLRALHDLLTTYAVTHPQVSYCQGMSDLASPILAVMDHEGHAFVCFCGIMKRLAANFHPDGRAMATKFAHLKLLLRHADPDFYQYLQEAGADDLFFCYRWLLLELKREFAFDDALRMLEVTWSSLPPDPPEHEVELVGPPSQVADTGFGSHRGRPVRQRHMLRPAGGGGGAFEDAVVHLAASSQGPSGGGRLLRQASLDGLQQLRDNMGLRKDHLVQLSHPATLISSKSLSEPLLNSPDPLLSTSSRPDSPSSSSPPSTQEASPSGDIAVGSPLMQEVGSPRDPGKPVPPPPPMGLPPPQEFGRGNPFMLFLCLAILLEHRDHIMRNGLDYNELAMHFDRLVRKHHLGRVLRRAKALFADYLQSEVWDSEEGAEATAPS.

The tract at residues 1 to 22 is disordered; the sequence is MRPPAQARWEGQGPTAPLRLRS. Ser-194 bears the Phosphoserine mark. Thr-214 carries the phosphothreonine modification. A Rab-GAP TBC domain is found at 282-488; it reads GVEPSLRKVV…RMLEVTWSSL (207 aa). A Phosphoserine modification is found at Ser-560. A disordered region spans residues 592 to 664; sequence SLSEPLLNSP…PPMGLPPPQE (73 aa). The segment covering 600 to 628 has biased composition (low complexity); sequence SPDPLLSTSSRPDSPSSSSPPSTQEASPS. The segment covering 649–663 has biased composition (pro residues); that stretch reads KPVPPPPPMGLPPPQ.

As to quaternary structure, interacts (via N-terminus) with MAP1LC3B, GABARAP and GABARAPL2.

The protein resides in the cytoplasm. It localises to the cytoplasmic vesicle. The protein localises to the autophagosome. Functionally, acts as a GTPase-activating protein specific for RAB33B. Involved in the regulation of autophagosome maturation, the process in which autophagosomes fuse with endosomes and lysosomes. This chain is TBC1 domain family member 25 (Tbc1d25), found in Mus musculus (Mouse).